Reading from the N-terminus, the 79-residue chain is Acyl carrier protein (79 aa).

The Carrier domain maps to 2–77 (ADFEARVKEI…SAIDYVKTHV (76 aa)). Ser37 is subject to O-(pantetheine 4'-phosphoryl)serine.

The protein belongs to the acyl carrier protein (ACP) family. Post-translationally, 4'-phosphopantetheine is transferred from CoA to a specific serine of apo-ACP by AcpS. This modification is essential for activity because fatty acids are bound in thioester linkage to the sulfhydryl of the prosthetic group.

It localises to the cytoplasm. Its pathway is lipid metabolism; fatty acid biosynthesis. Carrier of the growing fatty acid chain in fatty acid biosynthesis. This chain is Acyl carrier protein, found in Endomicrobium trichonymphae.